The primary structure comprises 249 residues: Mannose-binding protein A (249 aa).

Residues 1–20 (MLLFSSLPVLLLCVVTASYS) form the signal peptide. Residues 41-102 (VTNGTPGRDG…KGDPGDTSGV (62 aa)) form a disordered region. A compositionally biased stretch (basic and acidic residues) spans 48-60 (RDGRDGPKGEKGE). P54 carries the post-translational modification 4-hydroxyproline. K55 and K58 each carry 5-hydroxylysine. 2 O-linked (Gal...) hydroxylysine glycosylation sites follow: K55 and K58. A 4-hydroxyproline mark is found at P61, P72, P78, and P89. One can recognise a Collagen-like domain in the interval 64 to 98 (GFRGSQGPPGKMGPPGNIGETGPLGPKGQKGDPGD). A 5-hydroxylysine mark is found at K90 and K93. O-linked (Gal...) hydroxylysine glycosylation is found at K90 and K93. A C-type lectin domain is found at 135-246 (SRKKLYVTNG…CSSSFLAVCE (112 aa)). 2 disulfide bridges follow: C156-C245 and C223-C237. Ca(2+) contacts are provided by D189, E193, E213, N215, D216, E221, D222, N233, and D234. The tract at residues 213–221 (EPNDHGSGE) is calcium-dependent carbohydrate binding.

In terms of assembly, interacts with MASP1 and MASP2. Forms oligomeric complexes of 3, 4, 5 or, predominantly, 6 homotrimers. The homotrimers appear as globular heads that are connected to a central hub by thin stalks. In terms of processing, hydroxylated on lysine and proline residues within the collagen-like domain. Post-translationally, O-glycosylated. O-linked glycans on hydroxylysine residues consist of Glc-Gal disaccharides bound to the oxygen atom of post-translationally added hydroxyl groups. As to expression, detected in blood serum (at protein level). Expressed in liver. Weakly expressed in lung, testis and brain. Not detected in bone marrow and heart.

The protein localises to the secreted. Calcium-dependent lectin. Plays a role in the innate immune response by binding mannose, fucose and N-acetylglucosamine on bacteria, including strains of A.suis, H.parasuis and A.pleuropneumoniae, and activates the lectin complement pathway. According to some authors, it only binds mannose. In Sus scrofa (Pig), this protein is Mannose-binding protein A.